A 1208-amino-acid polypeptide reads, in one-letter code: Period circadian protein (1208 aa).

Disordered stretches follow at residues Met1 to Ser171 and Gly214 to Arg235. Low complexity predominate over residues Ser16–Ser47. The Nuclear localization signal signature appears at Lys66–Lys79. A compositionally biased stretch (basic residues) spans Lys66–Lys79. Composition is skewed to basic and acidic residues over residues Gln129–Ala139 and Glu147–Ala164. The segment covering Lys217–Thr232 has biased composition (low complexity). 2 consecutive PAS domains span residues Glu242–Ile377 and Phe395–Gln501. Disordered stretches follow at residues Val636–Tyr747, Glu802–Glu821, Thr961–Thr982, and Val1076–Gly1208. A compositionally biased stretch (polar residues) spans Asn679–Ala697. 17 repeat units span residues Gly698–Thr699, Gly701–Thr702, Gly703–Thr704, Gly705–Thr706, Gly707–Thr708, Gly709–Thr710, Gly711–Thr712, Gly713–Thr714, Gly715–Thr716, Gly717–Thr718, Gly719–Thr720, Gly721–Thr722, Gly723–Thr724, Gly725–Thr726, Gly727–Thr728, Gly729–Thr730, and Gly731–Asn732. The span at Gly698 to Thr740 shows a compositional bias: gly residues. Residues Gly698–Ser742 are 21 X 2 AA approximate tandem repeats of G-[TN]. One copy of the 18; approximate repeat lies at Thr734–Asn735. 2 repeat units span residues Gly737–Thr738 and Gly739–Thr740. A 21; approximate repeat occupies Gly741–Ser742. Residues Val1076–Val1092 show a composition bias toward low complexity. Over residues Leu1127 to Lys1138 the composition is skewed to polar residues. Residues Asp1142–Ser1161 show a composition bias toward low complexity. Residues Lys1193–Gly1208 are compositionally biased toward basic and acidic residues.

In terms of assembly, forms a heterodimer with timeless (TIM); the complex then translocates into the nucleus. Phosphorylated with a circadian rhythmicity, probably by the double-time protein (dbt). Phosphorylation could be implicated in the stability of per monomer and in the formation of heterodimer per-tim.

The protein resides in the nucleus. It localises to the cytoplasm. The protein localises to the perinuclear region. Functionally, essential for biological clock functions. Determines the period length of circadian and ultradian rhythms; an increase in PER dosage leads to shortened circadian rhythms and a decrease leads to lengthened circadian rhythms. Essential for the circadian rhythmicity of locomotor activity, eclosion behavior, and for the rhythmic component of the male courtship song that originates in the thoracic nervous system. The biological cycle depends on the rhythmic formation and nuclear localization of the TIM-PER complex. Light induces the degradation of TIM, which promotes elimination of PER. Nuclear activity of the heterodimer coordinatively regulates PER and TIM transcription through a negative feedback loop. Behaves as a negative element in circadian transcriptional loop. Does not appear to bind DNA, suggesting indirect transcriptional inhibition. In Drosophila yakuba (Fruit fly), this protein is Period circadian protein (per).